The sequence spans 304 residues: N-acetylmuramic acid 6-phosphate etherase (304 aa).

One can recognise an SIS domain in the interval 62 to 225 (IVQAFQNGGR…TTASMVMIGK (164 aa)). Glutamate 90 functions as the Proton donor in the catalytic mechanism. Glutamate 121 is an active-site residue.

It belongs to the GCKR-like family. MurNAc-6-P etherase subfamily. As to quaternary structure, homodimer.

It catalyses the reaction N-acetyl-D-muramate 6-phosphate + H2O = N-acetyl-D-glucosamine 6-phosphate + (R)-lactate. Its pathway is amino-sugar metabolism; 1,6-anhydro-N-acetylmuramate degradation. It functions in the pathway amino-sugar metabolism; N-acetylmuramate degradation. The protein operates within cell wall biogenesis; peptidoglycan recycling. Its function is as follows. Specifically catalyzes the cleavage of the D-lactyl ether substituent of MurNAc 6-phosphate, producing GlcNAc 6-phosphate and D-lactate. Together with AnmK, is also required for the utilization of anhydro-N-acetylmuramic acid (anhMurNAc) either imported from the medium or derived from its own cell wall murein, and thus plays a role in cell wall recycling. The protein is N-acetylmuramic acid 6-phosphate etherase of Actinobacillus pleuropneumoniae serotype 7 (strain AP76).